Here is a 171-residue protein sequence, read N- to C-terminus: 3-hydroxydecanoyl-[acyl-carrier-protein] dehydratase (171 aa).

Histidine 70 is an active-site residue.

The protein belongs to the thioester dehydratase family. FabA subfamily. Homodimer.

The protein localises to the cytoplasm. The enzyme catalyses a (3R)-hydroxyacyl-[ACP] = a (2E)-enoyl-[ACP] + H2O. It carries out the reaction (3R)-hydroxydecanoyl-[ACP] = (2E)-decenoyl-[ACP] + H2O. The catalysed reaction is (2E)-decenoyl-[ACP] = (3Z)-decenoyl-[ACP]. It participates in lipid metabolism; fatty acid biosynthesis. Functionally, necessary for the introduction of cis unsaturation into fatty acids. Catalyzes the dehydration of (3R)-3-hydroxydecanoyl-ACP to E-(2)-decenoyl-ACP and then its isomerization to Z-(3)-decenoyl-ACP. Can catalyze the dehydratase reaction for beta-hydroxyacyl-ACPs with saturated chain lengths up to 16:0, being most active on intermediate chain length. The polypeptide is 3-hydroxydecanoyl-[acyl-carrier-protein] dehydratase (Ectopseudomonas mendocina (strain ymp) (Pseudomonas mendocina)).